The chain runs to 1416 residues: DNA-directed RNA polymerase subunit beta' (1416 aa).

Zn(2+) contacts are provided by cysteine 60, cysteine 62, cysteine 75, and cysteine 78. Residues aspartate 449, aspartate 451, and aspartate 453 each contribute to the Mg(2+) site. Residues cysteine 781, cysteine 855, cysteine 862, and cysteine 865 each coordinate Zn(2+).

The protein belongs to the RNA polymerase beta' chain family. As to quaternary structure, the RNAP catalytic core consists of 2 alpha, 1 beta, 1 beta' and 1 omega subunit. When a sigma factor is associated with the core the holoenzyme is formed, which can initiate transcription. It depends on Mg(2+) as a cofactor. Requires Zn(2+) as cofactor.

The enzyme catalyses RNA(n) + a ribonucleoside 5'-triphosphate = RNA(n+1) + diphosphate. DNA-dependent RNA polymerase catalyzes the transcription of DNA into RNA using the four ribonucleoside triphosphates as substrates. The polypeptide is DNA-directed RNA polymerase subunit beta' (Treponema pallidum (strain Nichols)).